A 451-amino-acid chain; its full sequence is PTS system galactitol-specific EIIC component (451 aa).

Positions 6-435 (MRYILDLGPT…IYLTGIFMTW (430 aa)) constitute a PTS EIIC type-2 domain. 10 helical membrane passes run 9-29 (ILDL…SKIL), 41-61 (LHIG…LDSI), 92-112 (ASQI…AMLL), 138-158 (LATG…AFVY), 218-238 (FGPF…IGIL), 305-325 (AVVS…VCVP), 329-349 (VLPF…VAVH), 357-377 (LISG…TIGL), 392-412 (GMVA…IQVF), and 415-435 (QNIP…FMTW).

Forms a complex with one each of subunit of GatA, GatB and 2 subunits of GatC.

Its subcellular location is the cell inner membrane. The phosphoenolpyruvate-dependent sugar phosphotransferase system (PTS), a major carbohydrate active transport system, catalyzes the phosphorylation of incoming sugar substrates concomitant with their translocation across the cell membrane. The enzyme II complex composed of GatA, GatB and GatC is involved in galactitol transport. The protein is PTS system galactitol-specific EIIC component (gatC) of Escherichia coli O157:H7.